We begin with the raw amino-acid sequence, 99 residues long: Aspartyl/glutamyl-tRNA(Asn/Gln) amidotransferase subunit C (99 aa).

The protein belongs to the GatC family. In terms of assembly, heterotrimer of A, B and C subunits.

It carries out the reaction L-glutamyl-tRNA(Gln) + L-glutamine + ATP + H2O = L-glutaminyl-tRNA(Gln) + L-glutamate + ADP + phosphate + H(+). The enzyme catalyses L-aspartyl-tRNA(Asn) + L-glutamine + ATP + H2O = L-asparaginyl-tRNA(Asn) + L-glutamate + ADP + phosphate + 2 H(+). Functionally, allows the formation of correctly charged Asn-tRNA(Asn) or Gln-tRNA(Gln) through the transamidation of misacylated Asp-tRNA(Asn) or Glu-tRNA(Gln) in organisms which lack either or both of asparaginyl-tRNA or glutaminyl-tRNA synthetases. The reaction takes place in the presence of glutamine and ATP through an activated phospho-Asp-tRNA(Asn) or phospho-Glu-tRNA(Gln). This is Aspartyl/glutamyl-tRNA(Asn/Gln) amidotransferase subunit C from Ralstonia pickettii (strain 12J).